A 299-amino-acid polypeptide reads, in one-letter code: MDNIVYDFAKITFQAKDNRSPTTNSNLSWQLNQMALSDMEEMQDTSEPIAPPESDDNVSSESHDSDDVDSQLSRCEDNDDDSDCISGSSRRSSTFGARAGVARRRMPARVSKDNFNRICSAIMKPIKKKQRKELNTNAQTLKSIEKIYTSRRMKKFTPTNLETIFEEPSDENAADAEDDSEECSISSQVKVVKVWGRKLRRAISFSDGLNKNKILSKRRRQKVKKTFGKRFALKKISMTEFHDRLNKSFDSAMLEGDDAEAGGSAEAVNIPKTSMTMEDIQLPTMSSQHQFLMQPAGFE.

Positions 16 to 100 (KDNRSPTTNS…RSSTFGARAG (85 aa)) are disordered. Residues 20-35 (SPTTNSNLSWQLNQMA) show a composition bias toward polar residues. Acidic residues predominate over residues 53 to 69 (ESDDNVSSESHDSDDVD). The span at 84-93 (CISGSSRRSS) shows a compositional bias: low complexity. A phosphoserine mark is found at Ser-204 and Ser-264.

Binds to DNA in vitro. Interacts directly with Asx. As to expression, ubiquitously expressed in precellularized embryos. Then it decreases at cellular blastoderm to increase again during germ band extension. During germ band extension, it is highly expressed in somatic and visceral mesoderm. Ubiquitously expressed in imaginal disks. In ovary, it is expressed from stage 10.

It localises to the nucleus. Its subcellular location is the cytoplasm. It is found in the chromosome. Potential cofactor involved in sensory organ development. Despite its interaction with the Polycomb group protein Asx, it does not regulate the expression of homeotic genes. This chain is Protein tantalus, found in Drosophila melanogaster (Fruit fly).